The sequence spans 235 residues: Phosphoribosylaminoimidazole-succinocarboxamide synthase (235 aa).

The protein belongs to the SAICAR synthetase family.

It catalyses the reaction 5-amino-1-(5-phospho-D-ribosyl)imidazole-4-carboxylate + L-aspartate + ATP = (2S)-2-[5-amino-1-(5-phospho-beta-D-ribosyl)imidazole-4-carboxamido]succinate + ADP + phosphate + 2 H(+). Its pathway is purine metabolism; IMP biosynthesis via de novo pathway; 5-amino-1-(5-phospho-D-ribosyl)imidazole-4-carboxamide from 5-amino-1-(5-phospho-D-ribosyl)imidazole-4-carboxylate: step 1/2. The protein is Phosphoribosylaminoimidazole-succinocarboxamide synthase of Streptococcus pneumoniae serotype 19F (strain G54).